We begin with the raw amino-acid sequence, 535 residues long: Dual specificity calcium/calmodulin-dependent 3',5'-cyclic nucleotide phosphodiesterase 1B (535 aa).

The interval M1–E21 is disordered. Phosphoserine occurs at positions 7 and 14. Calmodulin-binding regions lie at residues S27 to N47 and E117 to R140. The PDEase domain occupies V145–G502. H222 (proton donor) is an active-site residue. Residues H226, H262, D263, and D369 each contribute to the Zn(2+) site. Residue D263 participates in Mg(2+) binding. 2 disordered regions span residues Q444–N474 and W495–D535. Polar residues predominate over residues K454 to Q463. Phosphoserine occurs at positions 465 and 513.

The protein belongs to the cyclic nucleotide phosphodiesterase family. PDE1 subfamily. In terms of assembly, homodimer. It depends on Zn(2+) as a cofactor. Mg(2+) is required as a cofactor.

Its subcellular location is the cytoplasm. It localises to the cytosol. The catalysed reaction is a nucleoside 3',5'-cyclic phosphate + H2O = a nucleoside 5'-phosphate + H(+). It catalyses the reaction 3',5'-cyclic GMP + H2O = GMP + H(+). It carries out the reaction 3',5'-cyclic AMP + H2O = AMP + H(+). With respect to regulation, type I PDE are activated by the binding of calmodulin in the presence of Ca(2+). Cyclic nucleotide phosphodiesterase with a dual specificity for the second messengers cAMP and cGMP, which are key regulators of many important physiological processes. Has a preference for cGMP as a substrate. The sequence is that of Dual specificity calcium/calmodulin-dependent 3',5'-cyclic nucleotide phosphodiesterase 1B from Mus musculus (Mouse).